Consider the following 122-residue polypeptide: Structural protein p14.5 (122 aa).

2 disordered regions span residues 1 to 27 and 73 to 122; these read MADF…LEYD and EDNN…HKSK. N-acetylalanine; by host is present on A2. Basic residues predominate over residues 105-122; it reads KPKKKKHLFPKLSSHKSK.

It belongs to the asfivirus structural protein p14.5 family. Interacts with the major capsid protein. Interacts with host IRF3; this interaction interferes with the recruitment of IRF3 to TBK1. Post-translationally, acetylated.

It localises to the virion. Its function is as follows. Structural protein required for transport of intracellular particles from the assembly sites to the plasma membrane. Binds to both ssDNA and dsDNA. Suppressed the activation of the cGAS/STING pathway by interfering with the recruitment of IRF3 to TBK1, which in turn suppresses IRF3 phosphorylation, decreasing interferon production. This African swine fever virus (isolate Warthog/Namibia/Wart80/1980) (ASFV) protein is Structural protein p14.5.